A 210-amino-acid chain; its full sequence is Dephospho-CoA kinase (210 aa).

In terms of domain architecture, DPCK spans 15–210 (VLGLTGGIGC…HKGYLKLALK (196 aa)). 23-28 (GCGKTA) contributes to the ATP binding site.

Belongs to the CoaE family.

Its subcellular location is the cytoplasm. The catalysed reaction is 3'-dephospho-CoA + ATP = ADP + CoA + H(+). It functions in the pathway cofactor biosynthesis; coenzyme A biosynthesis; CoA from (R)-pantothenate: step 5/5. In terms of biological role, catalyzes the phosphorylation of the 3'-hydroxyl group of dephosphocoenzyme A to form coenzyme A. The protein is Dephospho-CoA kinase of Pseudoalteromonas translucida (strain TAC 125).